Consider the following 485-residue polypeptide: Cysteine--tRNA ligase (485 aa).

C27 serves as a coordination point for Zn(2+). The 'HIGH' region motif lies at 29–39; it reads ITAYDLCHIGH. Residues C208, H233, and E237 each contribute to the Zn(2+) site. A 'KMSKS' region motif is present at residues 265–269; sequence KMSKS. K268 is a binding site for ATP.

The protein belongs to the class-I aminoacyl-tRNA synthetase family. Monomer. Requires Zn(2+) as cofactor.

Its subcellular location is the cytoplasm. It carries out the reaction tRNA(Cys) + L-cysteine + ATP = L-cysteinyl-tRNA(Cys) + AMP + diphosphate. This chain is Cysteine--tRNA ligase, found in Maridesulfovibrio salexigens (strain ATCC 14822 / DSM 2638 / NCIMB 8403 / VKM B-1763) (Desulfovibrio salexigens).